A 323-amino-acid polypeptide reads, in one-letter code: Thiamine-monophosphate kinase (323 aa).

Positions 30, 45, 46, and 47 each coordinate Mg(2+). Residue His54 participates in substrate binding. Asp75 and Asp122 together coordinate Mg(2+). ATP-binding positions include 121–122 and Arg146; that span reads GD. Residue Asp212 coordinates Mg(2+). Ser214 is a binding site for ATP. Asp215 is a binding site for Mg(2+). Positions 263 and 319 each coordinate substrate.

It belongs to the thiamine-monophosphate kinase family.

The catalysed reaction is thiamine phosphate + ATP = thiamine diphosphate + ADP. It participates in cofactor biosynthesis; thiamine diphosphate biosynthesis; thiamine diphosphate from thiamine phosphate: step 1/1. Its function is as follows. Catalyzes the ATP-dependent phosphorylation of thiamine-monophosphate (TMP) to form thiamine-pyrophosphate (TPP), the active form of vitamin B1. This is Thiamine-monophosphate kinase from Buchnera aphidicola subsp. Acyrthosiphon pisum (strain APS) (Acyrthosiphon pisum symbiotic bacterium).